The chain runs to 94 residues: MSRSKKKGPYVHPKLLKKIKEMNEKGEKKPIKTWSRASMVVPEMIGHTIAVYNGMKHIPVYITENMIGHRLGEFSPTRRFGGHADKKSKKGQVK.

The disordered stretch occupies residues 73 to 94; it reads EFSPTRRFGGHADKKSKKGQVK.

The protein belongs to the universal ribosomal protein uS19 family.

Its function is as follows. Protein S19 forms a complex with S13 that binds strongly to the 16S ribosomal RNA. The polypeptide is Small ribosomal subunit protein uS19 (Kosmotoga olearia (strain ATCC BAA-1733 / DSM 21960 / TBF 19.5.1)).